The chain runs to 489 residues: Aerolysin (489 aa).

Residues 1–24 (MMNRIITANLANLASSLMLAQVLG) form the signal peptide. 2 disulfides stabilise this stretch: C44–C100 and C184–C189. The interval 70 to 86 (WQITGLADRWVIMGPGY) is interaction with host N-linked glycan. The segment at 257–289 (YSLSEKVTTKNKFQWPLVGETELAIEIAASQSW) is part of the transmembrane beta-barrel after proteolytic activation of the toxin and insertion into the host membrane. Residues 347 to 356 (RWGGNAWYTH) form an interaction with glycans from host GPI-anchor region. Positions 445-489 (TRSAKAAQLRSASAEEVALTSVDLDSEALANEGFGNVSLTIVPVQ) are excised as a propeptide.

This sequence belongs to the aerolysin family. In terms of assembly, homodimer in solution; homoheptamer in the host membrane. After binding to GPI-anchored proteins in target membranes and proteolytic removal of the C-terminal propeptide, the protein assembles into a heptameric pre-pore complex. A further conformation change leads to insertion into the host membrane. Proteolytic cleavage and subsequent release of the propeptide trigger a major conformation change, leading to the formation of a heptameric pre-pore that then inserts into the host membrane.

It is found in the secreted. The protein localises to the host cell membrane. Secreted, cytolytic toxin that forms pores in host membranes after proteolytic removal of a C-terminal propeptide, leading to destruction of the membrane permeability barrier and cell death. The pores are formed by transmembrane beta-strands and are approximately 3 nm in diameter. This is Aerolysin (ash3) from Aeromonas salmonicida.